We begin with the raw amino-acid sequence, 678 residues long: Beta-catenin-like protein hmp-2 (678 aa).

ARM repeat units lie at residues 153-192 (RGGP…NLLM), 280-319 (PSNK…RNLS), 320-359 (DSAT…NLTC), 362-403 (TRNK…HCTA), and 409-448 (EEAQ…NSAL).

This sequence belongs to the beta-catenin family. In terms of assembly, component of a core catenin-cadherin complex consisting of hmr-1, hmp-1 and hmp-2; the complex localizes to adherens junctions. Interacts with hmr-1; the interaction is direct. May interact with hmp-1. Interacts with frk-1. In terms of tissue distribution, epidermal cells.

The protein resides in the cell junction. Its subcellular location is the adherens junction. In terms of biological role, required for cell migration during body enclosure and cell shape changes during body elongation. Plays a role in recruitment of the cadherin protein hmr-1 to adherens junctions. This is Beta-catenin-like protein hmp-2 (hmp-2) from Caenorhabditis elegans.